Here is a 291-residue protein sequence, read N- to C-terminus: Methionine aminopeptidase (291 aa).

Residue histidine 65 coordinates substrate. 3 residues coordinate a divalent metal cation: aspartate 85, aspartate 96, and histidine 155. Histidine 163 serves as a coordination point for substrate. The a divalent metal cation site is built by glutamate 188 and glutamate 276.

Belongs to the peptidase M24A family. Methionine aminopeptidase archaeal type 2 subfamily. In terms of assembly, monomer. It depends on Co(2+) as a cofactor. Requires Zn(2+) as cofactor. The cofactor is Mn(2+). Fe(2+) serves as cofactor.

It carries out the reaction Release of N-terminal amino acids, preferentially methionine, from peptides and arylamides.. Functionally, removes the N-terminal methionine from nascent proteins. The N-terminal methionine is often cleaved when the second residue in the primary sequence is small and uncharged (Met-Ala-, Cys, Gly, Pro, Ser, Thr, or Val). The sequence is that of Methionine aminopeptidase from Archaeoglobus fulgidus (strain ATCC 49558 / DSM 4304 / JCM 9628 / NBRC 100126 / VC-16).